A 438-amino-acid chain; its full sequence is Plasmalemma vesicle-associated protein (438 aa).

Topologically, residues 1–26 (MGLSMDRSPYARTGDQQRGCWYYLRY) are cytoplasmic. The chain crosses the membrane as a helical; Signal-anchor for type II membrane protein span at residues 27 to 47 (FFLFVSLIQFLIILGLVLFMI). At 48 to 438 (YGNVHATTES…VVNPAAQPSG (391 aa)) the chain is on the extracellular side. N-linked (GlcNAc...) asparagine glycosylation is found at asparagine 82, asparagine 88, asparagine 112, and asparagine 150. Coiled-coil stretches lie at residues 140–160 (KQCQ…LFKL), 189–224 (KRQT…QSLC), and 281–383 (EELA…ISAL). The tract at residues 391–413 (SLPAVPPRVSGPPPNPPPIDPAS) is disordered. Pro residues predominate over residues 394–410 (AVPPRVSGPPPNPPPID).

Homodimer. Expressed in lung, kidney, spleen, heart, muscle, eye, pancreas, thyroid, thymus, submaxillary gland, prostate, epididymis, uterus and liver.

It localises to the cell membrane. Its subcellular location is the membrane. The protein localises to the caveola. The protein resides in the cytoplasm. It is found in the perinuclear region. Its function is as follows. Endothelial cell-specific membrane protein involved in the formation of the diaphragms that bridge endothelial fenestrae. It is also required for the formation of stomata of caveolae and transendothelial channels. Functions in microvascular permeability, endothelial fenestrae contributing to the passage of water and solutes and regulating transcellular versus paracellular flow in different organs. Plays a specific role in embryonic development. In Mus musculus (Mouse), this protein is Plasmalemma vesicle-associated protein (Plvap).